The sequence spans 432 residues: FLYWCH-type zinc finger-containing protein peb-1 (432 aa).

Residues 1-33 form a disordered region; it reads MLGLEKPLSSDISSSSTDTSAISPISVSSMPLS. Over residues 9-26 the composition is skewed to low complexity; that stretch reads SSDISSSSTDTSAISPIS. The segment at residues 30-188 is a DNA-binding region (required for DNA-binding); that stretch reads MPLSPDKEKK…RNKEGKPRKP (159 aa). Residues 53–120 form an FLYWCH-type zinc finger; it reads IVTSFKGYQK…NACTKNTHNH (68 aa). Residues 174 to 195 are disordered; the sequence is SLVSARNKEGKPRKPKSKTSTN.

It is found in the nucleus. Its function is as follows. Putative transcription factor. Binds to specific sequence motif 5'-[TC][AGT]TGCC[GA][AT]-3' in regulatory elements of target genes such as myosin myo-2. May modulate gene expression, perhaps acting in opposition to transcription factor pha-4. Involved in morphogenesis, perhaps especially in formation of the pharynx. Plays roles in molting, feeding and morphology. The chain is FLYWCH-type zinc finger-containing protein peb-1 from Caenorhabditis briggsae.